Reading from the N-terminus, the 328-residue chain is tRNA uridine(34) hydroxylase (328 aa).

Residues 130–224 form the Rhodanese domain; sequence LDKDTVVLDT…YGKDPEVQGE (95 aa). Cys184 serves as the catalytic Cysteine persulfide intermediate.

The protein belongs to the TrhO family.

The catalysed reaction is uridine(34) in tRNA + AH2 + O2 = 5-hydroxyuridine(34) in tRNA + A + H2O. Its function is as follows. Catalyzes oxygen-dependent 5-hydroxyuridine (ho5U) modification at position 34 in tRNAs. The sequence is that of tRNA uridine(34) hydroxylase from Streptococcus pneumoniae serotype 19F (strain G54).